Reading from the N-terminus, the 199-residue chain is MTDLYAEALATFAALYAEAQNSAEPEASAMTVATANVDGRPSARTVLLKAFDARGFVFYTHLDSAKGRDLQTHPQAALLFLWRSLREAGIQVRIEGGVQLVSADESDAYFASRPRMSQIGAWASRQSQTLGSREEFDAAIAKVEATFEGREVPRPDGWGGFRVVPQAFEFWYGAKFRLHERWRYEADAASHWSKRMLYP.

FMN-binding positions include arginine 44–lysine 49, tyrosine 59–threonine 60, lysine 66, and glutamine 91. Lysine 49 lines the substrate pocket. Substrate is bound by residues tyrosine 109, arginine 113, and serine 117. Residues glutamine 126–serine 127 and tryptophan 171 each bind FMN. Arginine 177–histidine 179 provides a ligand contact to substrate. Residue arginine 181 participates in FMN binding.

The protein belongs to the pyridoxamine 5'-phosphate oxidase family. Homodimer. The cofactor is FMN.

It catalyses the reaction pyridoxamine 5'-phosphate + O2 + H2O = pyridoxal 5'-phosphate + H2O2 + NH4(+). The enzyme catalyses pyridoxine 5'-phosphate + O2 = pyridoxal 5'-phosphate + H2O2. The protein operates within cofactor metabolism; pyridoxal 5'-phosphate salvage; pyridoxal 5'-phosphate from pyridoxamine 5'-phosphate: step 1/1. Its pathway is cofactor metabolism; pyridoxal 5'-phosphate salvage; pyridoxal 5'-phosphate from pyridoxine 5'-phosphate: step 1/1. In terms of biological role, catalyzes the oxidation of either pyridoxine 5'-phosphate (PNP) or pyridoxamine 5'-phosphate (PMP) into pyridoxal 5'-phosphate (PLP). This is Pyridoxine/pyridoxamine 5'-phosphate oxidase from Xanthomonas euvesicatoria pv. vesicatoria (strain 85-10) (Xanthomonas campestris pv. vesicatoria).